Reading from the N-terminus, the 1020-residue chain is Protein translocase subunit SecA (1020 aa).

ATP is bound by residues Gln-143, 161–165 (GEGKT), and Asp-661. The segment at 974–1020 (SVYNASPGAENEAPLQRPVTADSKPGRNDPCPCGSGKKYKNCHGQQP) is disordered. Zn(2+) contacts are provided by Cys-1004, Cys-1006, Cys-1015, and His-1016.

Belongs to the SecA family. In terms of assembly, monomer and homodimer. Part of the essential Sec protein translocation apparatus which comprises SecA, SecYEG and auxiliary proteins SecDF. Other proteins may also be involved. Zn(2+) serves as cofactor.

Its subcellular location is the cell inner membrane. The protein localises to the cytoplasm. It catalyses the reaction ATP + H2O + cellular proteinSide 1 = ADP + phosphate + cellular proteinSide 2.. Its function is as follows. Part of the Sec protein translocase complex. Interacts with the SecYEG preprotein conducting channel. Has a central role in coupling the hydrolysis of ATP to the transfer of proteins into and across the cell membrane, serving as an ATP-driven molecular motor driving the stepwise translocation of polypeptide chains across the membrane. The polypeptide is Protein translocase subunit SecA (Chlorobium phaeovibrioides (strain DSM 265 / 1930) (Prosthecochloris vibrioformis (strain DSM 265))).